The chain runs to 188 residues: MKKLFLIIGAPGSGKTTDASLIAKEDDKYAHFSTGDLLRAEVASGSELGKKIDSFISKGNLVPLEVVVNAIISAIKGSEKSNIIIDGYPRSVEQMTELDKVLSAQNEINLRGVIEVDVSEAIARERVLGRARGADDNNEVFNNRMKVYLDPIEAIRKFYKGKNLLHVVNGERTIEPIVADIKKLIENL.

12–17 (GSGKTT) is a binding site for ATP. An NMP region spans residues 33 to 62 (STGDLLRAEVASGSELGKKIDSFISKGNLV). AMP contacts are provided by residues Thr34, Arg39, 60–62 (NLV), 87–90 (GYPR), and Gln94. Residues 129 to 135 (GRARGAD) are LID. Arg130 contributes to the ATP binding site. Residues Arg132 and Arg144 each contribute to the AMP site. Arg172 provides a ligand contact to ATP.

The protein belongs to the adenylate kinase family. As to quaternary structure, monomer.

The protein resides in the cytoplasm. The enzyme catalyses AMP + ATP = 2 ADP. It participates in purine metabolism; AMP biosynthesis via salvage pathway; AMP from ADP: step 1/1. Catalyzes the reversible transfer of the terminal phosphate group between ATP and AMP. Plays an important role in cellular energy homeostasis and in adenine nucleotide metabolism. The polypeptide is Adenylate kinase (Campylobacter curvus (strain 525.92)).